Reading from the N-terminus, the 217-residue chain is FMN-dependent NADH:quinone oxidoreductase (217 aa).

FMN is bound by residues serine 10 and 16–18 (SVS).

This sequence belongs to the azoreductase type 1 family. As to quaternary structure, homodimer. FMN is required as a cofactor.

It catalyses the reaction 2 a quinone + NADH + H(+) = 2 a 1,4-benzosemiquinone + NAD(+). The catalysed reaction is N,N-dimethyl-1,4-phenylenediamine + anthranilate + 2 NAD(+) = 2-(4-dimethylaminophenyl)diazenylbenzoate + 2 NADH + 2 H(+). Functionally, quinone reductase that provides resistance to thiol-specific stress caused by electrophilic quinones. In terms of biological role, also exhibits azoreductase activity. Catalyzes the reductive cleavage of the azo bond in aromatic azo compounds to the corresponding amines. The protein is FMN-dependent NADH:quinone oxidoreductase of Polaromonas naphthalenivorans (strain CJ2).